A 132-amino-acid polypeptide reads, in one-letter code: Small ribosomal subunit protein uS8 (132 aa).

Belongs to the universal ribosomal protein uS8 family. In terms of assembly, part of the 30S ribosomal subunit. Contacts proteins S5 and S12.

Its function is as follows. One of the primary rRNA binding proteins, it binds directly to 16S rRNA central domain where it helps coordinate assembly of the platform of the 30S subunit. The polypeptide is Small ribosomal subunit protein uS8 (Flavobacterium johnsoniae (strain ATCC 17061 / DSM 2064 / JCM 8514 / BCRC 14874 / CCUG 350202 / NBRC 14942 / NCIMB 11054 / UW101) (Cytophaga johnsonae)).